Consider the following 480-residue polypeptide: uncharacterized protein (480 aa).

Residues 16 to 46 (CDRCRRRKIRCTGSDIPGQPCLACQKAHADC) constitute a DNA-binding region (zn(2)-C6 fungal-type). Positions 298-307 (SFGASVSPKS) are enriched in low complexity. A disordered region spans residues 298–325 (SFGASVSPKSTPGSNSTGAAVDTNSVHS). The segment covering 308 to 325 (TPGSNSTGAAVDTNSVHS) has biased composition (polar residues).

It localises to the cytoplasm. The protein resides in the nucleus. This is an uncharacterized protein from Schizosaccharomyces pombe (strain 972 / ATCC 24843) (Fission yeast).